Consider the following 562-residue polypeptide: O-fucosyltransferase 4 (562 aa).

The interval 10–46 (SIQNRLPGSDHTTPSPPTSPHLCRSRSKSSSVSGQQQ) is disordered. The span at 37 to 46 (KSSSVSGQQQ) shows a compositional bias: low complexity. The chain crosses the membrane as a helical; Signal-anchor for type II membrane protein span at residues 67 to 87 (GILLFAPIIYISCMLFHLHAA). N-linked (GlcNAc...) asparagine glycosylation is found at N122, N146, N185, and N239. Position 332-334 (332-334 (HLR)) interacts with substrate. Residues N404, N420, N450, and N555 are each glycosylated (N-linked (GlcNAc...) asparagine).

It belongs to the glycosyltransferase GT106 family.

The protein resides in the membrane. Its pathway is glycan metabolism. The polypeptide is O-fucosyltransferase 4 (Arabidopsis thaliana (Mouse-ear cress)).